The primary structure comprises 313 residues: tRNA dimethylallyltransferase (313 aa).

10–17 (GPTAVGKT) provides a ligand contact to ATP. A substrate-binding site is contributed by 12–17 (TAVGKT). Residues 35 to 38 (DSMQ) are interaction with substrate tRNA.

The protein belongs to the IPP transferase family. Monomer. It depends on Mg(2+) as a cofactor.

It carries out the reaction adenosine(37) in tRNA + dimethylallyl diphosphate = N(6)-dimethylallyladenosine(37) in tRNA + diphosphate. Its function is as follows. Catalyzes the transfer of a dimethylallyl group onto the adenine at position 37 in tRNAs that read codons beginning with uridine, leading to the formation of N6-(dimethylallyl)adenosine (i(6)A). The sequence is that of tRNA dimethylallyltransferase from Alkaliphilus oremlandii (strain OhILAs) (Clostridium oremlandii (strain OhILAs)).